Here is a 365-residue protein sequence, read N- to C-terminus: Protein Wnt-6 (365 aa).

Positions 1–24 (MLPPLPSRLGLLLLLLLCPAHVGG) are cleaved as a signal peptide. 11 disulfides stabilise this stretch: Cys76/Cys87, Cys124/Cys132, Cys134/Cys172, Cys222/Cys236, Cys224/Cys231, Cys294/Cys325, Cys310/Cys320, Cys324/Cys364, Cys340/Cys355, Cys342/Cys352, and Cys347/Cys348. Residue Asn86 is glycosylated (N-linked (GlcNAc...) asparagine). The segment covering 140–158 (RAPPRPSGLPGTPGPPGPA) has biased composition (pro residues). Positions 140–164 (RAPPRPSGLPGTPGPPGPAGSPEGS) are disordered. Residue Ser228 is the site of O-palmitoleoyl serine; by PORCN attachment. Asn311 carries an N-linked (GlcNAc...) asparagine glycan.

It belongs to the Wnt family. Interacts with PORCN. Palmitoleoylation is required for efficient binding to frizzled receptors. Depalmitoleoylation leads to Wnt signaling pathway inhibition. As to expression, expressed in gastric cancer cell lines and gastric cancer tissues (at protein level). Detected in the apical gland region of the gastric foveolar epithelium (at protein level).

It is found in the secreted. The protein resides in the extracellular space. Its subcellular location is the extracellular matrix. In terms of biological role, ligand for members of the frizzled family of seven transmembrane receptors. Probable developmental protein. May be a signaling molecule which affects the development of discrete regions of tissues. Is likely to signal over only few cell diameters. Together with CAV1 may promote chemoresistance of gastric cancer cells to DNA-damaging anthracycline drugs through the activation of the canonical Wnt receptor signaling pathway. This chain is Protein Wnt-6 (WNT6), found in Homo sapiens (Human).